Consider the following 1029-residue polypeptide: E3 ubiquitin-protein ligase UPL6 (1029 aa).

The segment at 1-20 (MFFSGDPSTRKRVDLGGRST) is disordered. Basic and acidic residues predominate over residues 8 to 20 (STRKRVDLGGRST). Positions 45-74 (QNSAALKIQKFFRGRRSMAIERSKVRHDFC) constitute an IQ domain. The HECT domain maps to 688 to 1029 (SEDDLRSSIR…ISAEAGFDLS (342 aa)). The Glycyl thioester intermediate role is filled by cysteine 997.

The protein belongs to the UPL family.

It carries out the reaction S-ubiquitinyl-[E2 ubiquitin-conjugating enzyme]-L-cysteine + [acceptor protein]-L-lysine = [E2 ubiquitin-conjugating enzyme]-L-cysteine + N(6)-ubiquitinyl-[acceptor protein]-L-lysine.. It functions in the pathway protein modification; protein ubiquitination. Its function is as follows. Probable E3 ubiquitin-protein ligase which mediates ubiquitination and subsequent proteasomal degradation of target proteins. This is E3 ubiquitin-protein ligase UPL6 (UPL6) from Arabidopsis thaliana (Mouse-ear cress).